We begin with the raw amino-acid sequence, 391 residues long: uncharacterized protein (391 aa).

An OBG-type G domain is found at 85–314 (ATAAFVGFPS…LKEKIYEKLG (230 aa)). GTP-binding positions include 91–98 (GFPSVGKS), 137–141 (DAPGI), and 267–270 (NKID). The TGS domain occupies 314–389 (GFIKIYLKPQ…EDGDILTIVI (76 aa)).

This sequence belongs to the TRAFAC class OBG-HflX-like GTPase superfamily. OBG GTPase family.

This is an uncharacterized protein from Methanocaldococcus jannaschii (strain ATCC 43067 / DSM 2661 / JAL-1 / JCM 10045 / NBRC 100440) (Methanococcus jannaschii).